Reading from the N-terminus, the 273-residue chain is Homeobox protein Nkx-2.2 (273 aa).

Disordered stretches follow at residues 1 to 56 and 90 to 131; these read MSLT…LDAV and LAAG…KRKR. The span at 20–38 shows a compositional bias: acidic residues; that stretch reads DTNDEEGSVAEGPEEENEG. Residues 128–187 constitute a DNA-binding region (homeobox); the sequence is KRKRRVLFSKAQTYELERRFRQQRYLSAPEREHLASLIRLTPTQVKIWFQNHRYKMKRAR.

The protein belongs to the NK-2 homeobox family. As to quaternary structure, interacts with OLIG2.

It is found in the nucleus. Functionally, transcriptional activator involved in the development of insulin-producting beta cells in the endocrine pancreas. May also be involved in specifying diencephalic neuromeric boundaries, and in controlling the expression of genes that play a role in axonal guidance. Binds to elements within the NEUROD1 promoter. The protein is Homeobox protein Nkx-2.2 (NKX2-2) of Homo sapiens (Human).